We begin with the raw amino-acid sequence, 190 residues long: Elongation factor P (190 aa).

The residue at position 34 (lysine 34) is an N6-(3,6-diaminohexanoyl)-5-hydroxylysine.

The protein belongs to the elongation factor P family. Post-translationally, may be beta-lysylated on the epsilon-amino group of Lys-34 by the combined action of EpmA and EpmB, and then hydroxylated on the C5 position of the same residue by EpmC (if this protein is present). Lysylation is critical for the stimulatory effect of EF-P on peptide-bond formation. The lysylation moiety may extend toward the peptidyltransferase center and stabilize the terminal 3-CCA end of the tRNA. Hydroxylation of the C5 position on Lys-34 may allow additional potential stabilizing hydrogen-bond interactions with the P-tRNA.

The protein localises to the cytoplasm. The protein operates within protein biosynthesis; polypeptide chain elongation. Involved in peptide bond synthesis. Alleviates ribosome stalling that occurs when 3 or more consecutive Pro residues or the sequence PPG is present in a protein, possibly by augmenting the peptidyl transferase activity of the ribosome. Modification of Lys-34 is required for alleviation. The polypeptide is Elongation factor P (Hahella chejuensis (strain KCTC 2396)).